A 220-amino-acid chain; its full sequence is Large ribosomal subunit protein uL16 (220 aa).

It belongs to the universal ribosomal protein uL16 family. Component of the small ribosomal subunit. Mature ribosomes consist of a small (40S) and a large (60S) subunit. The 40S subunit contains about 33 different proteins and 1 molecule of RNA (18S). The 60S subunit contains about 49 different proteins and 3 molecules of RNA (25S, 5.8S and 5S).

The sequence is that of Large ribosomal subunit protein uL16 (RPL10) from Vitis riparia (Frost grape).